We begin with the raw amino-acid sequence, 272 residues long: MSKNPLGTLVVRIWKAKNLPNKALVGKQSPYCVCRVGEVVKRTQTDKRSGQEPSWNAVLEFNIPSESYHIMKITVFHEGFRKHPHLIGDTVLSFEKAMKEELQSEWYELKNEFQFAGELSVQFKFIPTDPLYFDRASSKPVLQFPYSSVAALTPVPKKPSKPSKPRKKVPVSHPLPPTPPSREEHVSVPRESSLFTYEDDPLPSFPSPYMVDDYYTQDVFVSDNVNDYSYGVQNPTNPRLSVEDYDANHSSLPPVPPPHLILPTASSSQIFH.

Residues 1 to 107 enclose the C2 domain; that stretch reads MSKNPLGTLV…MKEELQSEWY (107 aa). The interval 155–187 is disordered; sequence VPKKPSKPSKPRKKVPVSHPLPPTPPSREEHVS. Over residues 158 to 170 the composition is skewed to basic residues; sequence KPSKPSKPRKKVP.

The protein belongs to the INN1/fic1 family. Interacts with cdc15 and imp2.

Its subcellular location is the cytoplasm. It localises to the nucleus. Functionally, involved in the ingression of the plasma membrane during cytokinesis, leading to the separation of the daughter cells. Unlike its S.cerevisiae ortholog INN1, it does not play an essential role, probably because the actinomyosin ring is connected to the cell cortex by many more proteins. The sequence is that of Ingression protein fic1 (fic1) from Schizosaccharomyces pombe (strain 972 / ATCC 24843) (Fission yeast).